The chain runs to 318 residues: Pyrimidine-specific ribonucleoside hydrolase RihA (318 aa).

Histidine 240 is an active-site residue.

This sequence belongs to the IUNH family. RihA subfamily.

Hydrolyzes cytidine or uridine to ribose and cytosine or uracil, respectively. The protein is Pyrimidine-specific ribonucleoside hydrolase RihA of Shewanella baltica (strain OS185).